A 433-amino-acid chain; its full sequence is Methylenetetrahydrofolate--tRNA-(uracil-5-)-methyltransferase TrmFO (433 aa).

7–12 (GGGLAG) contacts FAD.

It belongs to the MnmG family. TrmFO subfamily. The cofactor is FAD.

The protein resides in the cytoplasm. The catalysed reaction is uridine(54) in tRNA + (6R)-5,10-methylene-5,6,7,8-tetrahydrofolate + NADH + H(+) = 5-methyluridine(54) in tRNA + (6S)-5,6,7,8-tetrahydrofolate + NAD(+). It catalyses the reaction uridine(54) in tRNA + (6R)-5,10-methylene-5,6,7,8-tetrahydrofolate + NADPH + H(+) = 5-methyluridine(54) in tRNA + (6S)-5,6,7,8-tetrahydrofolate + NADP(+). Catalyzes the folate-dependent formation of 5-methyl-uridine at position 54 (M-5-U54) in all tRNAs. This Natranaerobius thermophilus (strain ATCC BAA-1301 / DSM 18059 / JW/NM-WN-LF) protein is Methylenetetrahydrofolate--tRNA-(uracil-5-)-methyltransferase TrmFO.